A 268-amino-acid chain; its full sequence is Tryptophan synthase alpha chain (268 aa).

Catalysis depends on proton acceptor residues glutamate 49 and aspartate 60.

The protein belongs to the TrpA family. Tetramer of two alpha and two beta chains.

It carries out the reaction (1S,2R)-1-C-(indol-3-yl)glycerol 3-phosphate + L-serine = D-glyceraldehyde 3-phosphate + L-tryptophan + H2O. It participates in amino-acid biosynthesis; L-tryptophan biosynthesis; L-tryptophan from chorismate: step 5/5. In terms of biological role, the alpha subunit is responsible for the aldol cleavage of indoleglycerol phosphate to indole and glyceraldehyde 3-phosphate. This is Tryptophan synthase alpha chain from Vibrio parahaemolyticus serotype O3:K6 (strain RIMD 2210633).